The chain runs to 252 residues: Small ribosomal subunit protein uS3 (252 aa).

One can recognise a KH type-2 domain in the interval 38–106 (IRKYIHARLS…EVQINIFEIK (69 aa)). Positions 214-252 (PLAGMDKKQSGTGGGKGGDAPRGKSNFNKGGKPDARKRK) are disordered. Positions 224 to 233 (GTGGGKGGDA) are enriched in gly residues.

The protein belongs to the universal ribosomal protein uS3 family. In terms of assembly, part of the 30S ribosomal subunit. Forms a tight complex with proteins S10 and S14.

In terms of biological role, binds the lower part of the 30S subunit head. Binds mRNA in the 70S ribosome, positioning it for translation. The polypeptide is Small ribosomal subunit protein uS3 (Flavobacterium johnsoniae (strain ATCC 17061 / DSM 2064 / JCM 8514 / BCRC 14874 / CCUG 350202 / NBRC 14942 / NCIMB 11054 / UW101) (Cytophaga johnsonae)).